Reading from the N-terminus, the 336-residue chain is tRNA N6-adenosine threonylcarbamoyltransferase (336 aa).

The Fe cation site is built by His-115, His-119, and Tyr-136. Residues 136-140, Asp-168, Glu-185, and Ser-266 contribute to the substrate site; that span reads YVAGG. Asp-294 lines the Fe cation pocket.

Belongs to the KAE1 / TsaD family. It depends on Fe(2+) as a cofactor.

Its subcellular location is the cytoplasm. It carries out the reaction L-threonylcarbamoyladenylate + adenosine(37) in tRNA = N(6)-L-threonylcarbamoyladenosine(37) in tRNA + AMP + H(+). Required for the formation of a threonylcarbamoyl group on adenosine at position 37 (t(6)A37) in tRNAs that read codons beginning with adenine. Is probably involved in the transfer of the threonylcarbamoyl moiety of threonylcarbamoyl-AMP (TC-AMP) to the N6 group of A37. The protein is tRNA N6-adenosine threonylcarbamoyltransferase of Thermofilum pendens (strain DSM 2475 / Hrk 5).